A 322-amino-acid chain; its full sequence is Mas-related G-protein coupled receptor member X1 (322 aa).

At 1–30 (MDPTISSHDTESTPLNETGHPNCTPILTLS) the chain is on the extracellular side. A glycan (N-linked (GlcNAc...) asparagine) is linked at Asn-16. Residues 31–51 (FLVLITTLVGLAGNTIVLWLL) form a helical membrane-spanning segment. Topologically, residues 52–59 (GFRMRRKA) are cytoplasmic. A helical transmembrane segment spans residues 60–80 (ISVYILNLALADSFFLCCHFI). Over 81–100 (DSLLRIIDFYGLYAHKLSKD) the chain is Extracellular. Residues 101 to 121 (ILGNAAIIPYISGLSILSAIS) traverse the membrane as a helical segment. Residues 122-142 (TERCLCVLWPIWYHCHRPRNM) lie on the Cytoplasmic side of the membrane. Residues 143–163 (SAIICALIWVLSFLMGILDWF) form a helical membrane-spanning segment. Residues 164–179 (SGFLGETHHHLWKNVD) are Extracellular-facing. A helical membrane pass occupies residues 180–200 (FIITAFLIFLFMLLSGSSLAL). Topologically, residues 201 to 223 (LLRILCGPRRKPLSRLYVTIALT) are cytoplasmic. Residues 224–244 (VMVYLICGLPLGLYLFLLYWF) traverse the membrane as a helical segment. Topologically, residues 245 to 257 (GVHLHYPFCHIYQ) are extracellular. Residues 258–278 (VTAVLSCVNSSANPIIYFLVG) traverse the membrane as a helical segment. The Cytoplasmic segment spans residues 279 to 322 (SFRQHRKHRSLKRVLKRALEDTPEEDEYTDSHLHKTTEISESRY).

The protein belongs to the G-protein coupled receptor 1 family. Mas subfamily. As to expression, expressed in a subset of IB4-positive small diameter nociceptive dorsal root neurons.

The protein resides in the cell membrane. Functionally, orphan receptor activated by neuropeptides terminating in Arg-Phe or Arg-Phe-amide. Mediates its action by association with G proteins that activate a phosphatidylinositol-calcium second messenger system. Its effect is mediated by G(q) and G(11) proteins. May regulate the function of nociceptive neurons by modulation of pain perception. The polypeptide is Mas-related G-protein coupled receptor member X1 (Mus musculus (Mouse)).